The chain runs to 396 residues: tRNA-specific 2-thiouridylase MnmA (396 aa).

Residues 42–49 (GMSGGVDS) and Met-68 each bind ATP. Positions 128–130 (NPD) are interaction with target base in tRNA. The Nucleophile role is filled by Cys-133. A disulfide bridge connects residues Cys-133 and Cys-230. Residue Gly-158 participates in ATP binding. The interval 180 to 182 (KDQ) is interaction with tRNA. Cys-230 functions as the Cysteine persulfide intermediate in the catalytic mechanism. The tract at residues 342-343 (RY) is interaction with tRNA.

This sequence belongs to the MnmA/TRMU family.

It is found in the cytoplasm. The catalysed reaction is S-sulfanyl-L-cysteinyl-[protein] + uridine(34) in tRNA + AH2 + ATP = 2-thiouridine(34) in tRNA + L-cysteinyl-[protein] + A + AMP + diphosphate + H(+). Functionally, catalyzes the 2-thiolation of uridine at the wobble position (U34) of tRNA, leading to the formation of s(2)U34. The chain is tRNA-specific 2-thiouridylase MnmA from Pseudoalteromonas atlantica (strain T6c / ATCC BAA-1087).